The following is a 94-amino-acid chain: Large ribosomal subunit protein bL28 (94 aa).

A disordered region spans residues methionine 1–serine 21. The span at glycine 11–histidine 20 shows a compositional bias: polar residues.

This sequence belongs to the bacterial ribosomal protein bL28 family.

This Leptospira borgpetersenii serovar Hardjo-bovis (strain JB197) protein is Large ribosomal subunit protein bL28.